Reading from the N-terminus, the 182-residue chain is Large ribosomal subunit protein uL16 (182 aa).

The protein belongs to the universal ribosomal protein uL16 family.

The sequence is that of Large ribosomal subunit protein uL16 from Thermococcus onnurineus (strain NA1).